A 290-amino-acid chain; its full sequence is 4-hydroxy-tetrahydrodipicolinate synthase (290 aa).

Residue Thr44 participates in pyruvate binding. Residue Tyr132 is the Proton donor/acceptor of the active site. The Schiff-base intermediate with substrate role is filled by Lys160. A pyruvate-binding site is contributed by Ile202.

This sequence belongs to the DapA family. In terms of assembly, homotetramer; dimer of dimers.

It localises to the cytoplasm. The enzyme catalyses L-aspartate 4-semialdehyde + pyruvate = (2S,4S)-4-hydroxy-2,3,4,5-tetrahydrodipicolinate + H2O + H(+). It functions in the pathway amino-acid biosynthesis; L-lysine biosynthesis via DAP pathway; (S)-tetrahydrodipicolinate from L-aspartate: step 3/4. In terms of biological role, catalyzes the condensation of (S)-aspartate-beta-semialdehyde [(S)-ASA] and pyruvate to 4-hydroxy-tetrahydrodipicolinate (HTPA). The polypeptide is 4-hydroxy-tetrahydrodipicolinate synthase (Geotalea uraniireducens (strain Rf4) (Geobacter uraniireducens)).